Reading from the N-terminus, the 222-residue chain is Ras-related protein Rab-21 (222 aa).

Ala2 is modified (N-acetylalanine). Gly26, Gly29, Lys30, Thr31, Ser32, Asn43, Asp44, His46, Thr48, and Thr49 together coordinate GTP. Thr31 contacts Mg(2+). A Switch 1 motif is present at residues 41–54 (KFNDKHITTLQASF). Positions 49 and 72 each coordinate Mg(2+). The short motif at 74–92 (AGQERFHALGPIYYRDSNG) is the Switch 2 element. GTP-binding residues include Gly75, Asn130, Lys131, Asp133, Ala161, and Lys162. Residues Cys218 and Cys219 are each lipidated (S-geranylgeranyl cysteine). Cys219 carries the cysteine methyl ester modification. Positions 220 to 222 (SSG) are cleaved as a propeptide — removed in mature form.

This sequence belongs to the small GTPase superfamily. Rab family. In terms of assembly, interacts with the cytoplasmic tail of integrins ITGA1, ITGA2, ITGA5, ITGA6, ITGA11 and ITGB1; this interaction is dependent upon its GDP/GTP cycle. Interacts with RABGEF1 (via VPS9 domain). Interacts with ANKRD27. Interacts with VAMP7. Interacts (in GTP-bound form) with VAMP8 in response to starvation; the interaction probably regulates VAMP8 endolysosomal trafficking. Interacts (active GTP-bound form) with TMED10; the interaction is indirect and regulates TMED10 abundance and localization at the Golgi. Mg(2+) is required as a cofactor.

It is found in the endoplasmic reticulum membrane. Its subcellular location is the golgi apparatus. The protein localises to the trans-Golgi network. It localises to the golgi apparatus membrane. The protein resides in the early endosome membrane. It is found in the cytoplasmic vesicle membrane. Its subcellular location is the cleavage furrow. The protein localises to the cell projection. It localises to the neuron projection. The enzyme catalyses GTP + H2O = GDP + phosphate + H(+). With respect to regulation, regulated by guanine nucleotide exchange factors (GEFs) including ANKRD27 and RABGEF1, which promote the exchange of bound GDP for free GTP. Regulated by GTPase activating proteins (GAPs) which increase the GTP hydrolysis activity. Inhibited by GDP dissociation inhibitors (GDIs). Functionally, the small GTPases Rab are key regulators of intracellular membrane trafficking, from the formation of transport vesicles to their fusion with membranes. Rabs cycle between an inactive GDP-bound form and an active GTP-bound form that is able to recruit to membranes different sets of downstream effectors directly responsible for vesicle formation, movement, tethering and fusion. RAB21 is involved in membrane trafficking control. Regulates integrin internalization and recycling, but does not influence the traffic of endosomally translocated receptors in general. As a result, may regulate cell adhesion and migration. During the mitosis of adherent cells, controls the endosomal trafficking of integrins which is required for the successful completion of cytokinesis. Involved in neurite growth. Following SBF2/MTMT13-mediated activation in response to starvation-induced autophagy, binds to and regulates SNARE protein VAMP8 endolysosomal transport required for SNARE-mediated autophagosome-lysosome fusion. Modulates protein levels of the cargo receptors TMED2 and TMED10, and required for appropriate Golgi localization of TMED10. The protein is Ras-related protein Rab-21 of Mus musculus (Mouse).